We begin with the raw amino-acid sequence, 327 residues long: Vacuolar protein sorting-associated protein 26A (327 aa).

The segment at 306–327 (RTNFHQRFESPESQASAEQPEM) is disordered. Serine 315 bears the Phosphoserine mark. Positions 316-327 (PESQASAEQPEM) are enriched in polar residues.

Belongs to the VPS26 family. As to quaternary structure, component of the heterotrimeric retromer cargo-selective complex (CSC), also described as vacuolar protein sorting subcomplex (VPS), formed by VPS26 (VPS26A or VPS26B), VPS29 and VPS35. The CSC has a highly elongated structure with VPS26 and VPS29 binding independently at opposite distal ends of VPS35 as central platform. The CSC is believed to associate with variable sorting nexins to form functionally distinct retromer complex variants. The originally described retromer complex (also called SNX-BAR retromer) is a pentamer containing the CSC and a heterodimeric membrane-deforming subcomplex formed between SNX1 or SNX2 and SNX5 or SNX6 (also called SNX-BAR subcomplex); the respective CSC and SNX-BAR subcomplexes associate with low affinity. The CSC associates with SNX3 to form a SNX3-retromer complex. The CSC associates with SNX27, the WASH complex and the SNX-BAR subcomplex to form the SNX27-retromer complex. Interacts with VPS29, VPS35, SNX27, SNX1, SNX2, SNX5, SNX6, SNX3, RAB7A, ECPAS, EHD1, WASHC5, SORL1.

It localises to the cytoplasm. The protein resides in the endosome membrane. It is found in the early endosome. In terms of biological role, acts as a component of the retromer cargo-selective complex (CSC). The CSC is believed to be the core functional component of retromer or respective retromer complex variants acting to prevent missorting of selected transmembrane cargo proteins into the lysosomal degradation pathway. The recruitment of the CSC to the endosomal membrane involves RAB7A and SNX3. The SNX-BAR retromer mediates retrograde transport of cargo proteins from endosomes to the trans-Golgi network (TGN) and is involved in endosome-to-plasma membrane transport for cargo protein recycling. The SNX3-retromer mediates the retrograde endosome-to-TGN transport of WLS distinct from the SNX-BAR retromer pathway. The SNX27-retromer is believed to be involved in endosome-to-plasma membrane trafficking and recycling of a broad spectrum of cargo proteins. The CSC complex seems to act as recruitment hub for other proteins, such as the WASH complex and TBC1D5. Required for retrograde transport of lysosomal enzyme receptor IGF2R. Required to regulate transcytosis of the polymeric immunoglobulin receptor (pIgR-pIgA). Required for the endosomal localization of WASHC2 (indicative for the WASH complex). Required for the endosomal localization of TBC1D5. Mediates retromer cargo recognition of SORL1 and is involved in trafficking of SORL1 implicated in sorting and processing of APP. Involved in retromer-independent lysosomal sorting of F2R. Involved in recycling of ADRB2. Acts redundantly with VSP26B in SNX-27 mediated endocytic recycling of SLC2A1/GLUT1. Enhances the affinity of SNX27 for PDZ-binding motifs in cargo proteins. This Rattus norvegicus (Rat) protein is Vacuolar protein sorting-associated protein 26A (Vps26a).